A 55-amino-acid chain; its full sequence is Large ribosomal subunit protein bL33 (55 aa).

Belongs to the bacterial ribosomal protein bL33 family.

The polypeptide is Large ribosomal subunit protein bL33 (Baumannia cicadellinicola subsp. Homalodisca coagulata).